Consider the following 338-residue polypeptide: Stage V sporulation protein AD (338 aa).

The polypeptide is Stage V sporulation protein AD (spoVAD) (Bacillus subtilis (strain 168)).